We begin with the raw amino-acid sequence, 370 residues long: Queuine tRNA-ribosyltransferase (370 aa).

Asp-93 serves as the catalytic Proton acceptor. Residues 93-97 (DSGGF), Asp-147, Gln-189, and Gly-216 contribute to the substrate site. Positions 247 to 253 (GVGSPDC) are RNA binding. The active-site Nucleophile is the Asp-266. Positions 271-275 (TRIAR) are RNA binding; important for wobble base 34 recognition. The Zn(2+) site is built by Cys-304, Cys-306, Cys-309, and His-335.

Belongs to the queuine tRNA-ribosyltransferase family. In terms of assembly, homodimer. Within each dimer, one monomer is responsible for RNA recognition and catalysis, while the other monomer binds to the replacement base PreQ1. Zn(2+) serves as cofactor.

The catalysed reaction is 7-aminomethyl-7-carbaguanine + guanosine(34) in tRNA = 7-aminomethyl-7-carbaguanosine(34) in tRNA + guanine. The protein operates within tRNA modification; tRNA-queuosine biosynthesis. In terms of biological role, catalyzes the base-exchange of a guanine (G) residue with the queuine precursor 7-aminomethyl-7-deazaguanine (PreQ1) at position 34 (anticodon wobble position) in tRNAs with GU(N) anticodons (tRNA-Asp, -Asn, -His and -Tyr). Catalysis occurs through a double-displacement mechanism. The nucleophile active site attacks the C1' of nucleotide 34 to detach the guanine base from the RNA, forming a covalent enzyme-RNA intermediate. The proton acceptor active site deprotonates the incoming PreQ1, allowing a nucleophilic attack on the C1' of the ribose to form the product. After dissociation, two additional enzymatic reactions on the tRNA convert PreQ1 to queuine (Q), resulting in the hypermodified nucleoside queuosine (7-(((4,5-cis-dihydroxy-2-cyclopenten-1-yl)amino)methyl)-7-deazaguanosine). The sequence is that of Queuine tRNA-ribosyltransferase from Desulforamulus reducens (strain ATCC BAA-1160 / DSM 100696 / MI-1) (Desulfotomaculum reducens).